Reading from the N-terminus, the 348-residue chain is 3-isopropylmalate dehydrogenase (348 aa).

76–87 (GPKWTDPNNRPE) provides a ligand contact to NAD(+). Positions 94, 104, 132, and 217 each coordinate substrate. Mg(2+)-binding residues include D217, D241, and D245. Residue 275–287 (GSAPDIAGKNVAN) coordinates NAD(+).

Belongs to the isocitrate and isopropylmalate dehydrogenases family. LeuB type 1 subfamily. As to quaternary structure, homodimer. Requires Mg(2+) as cofactor. It depends on Mn(2+) as a cofactor.

The protein resides in the cytoplasm. It catalyses the reaction (2R,3S)-3-isopropylmalate + NAD(+) = 4-methyl-2-oxopentanoate + CO2 + NADH. The protein operates within amino-acid biosynthesis; L-leucine biosynthesis; L-leucine from 3-methyl-2-oxobutanoate: step 3/4. Functionally, catalyzes the oxidation of 3-carboxy-2-hydroxy-4-methylpentanoate (3-isopropylmalate) to 3-carboxy-4-methyl-2-oxopentanoate. The product decarboxylates to 4-methyl-2 oxopentanoate. The chain is 3-isopropylmalate dehydrogenase from Staphylococcus aureus (strain MW2).